Here is a 266-residue protein sequence, read N- to C-terminus: MIQITVVQIDNYGPWTVTPNPRRESDLQALQSRLYCDMNLQFGAHKGLAFYTRFDNIIAITNGIDLETHRRIQNSIKNRYPFTVSMAIASAETPYDAQKLATEKLQEYGSAQDEVRKEVLDIANEFVSNGYVQLAHVDINDITGTLTDLETAYDTYLSVQMTKLKLMEELKKYNSMGFFIGGDNFMCPCNGMNEKDFQCMFEDIMESSGIELKAGIGIGKTAEDASNLADIGLEIIREGKTDLQVYKLKQATGETKSSPYNYMCPI.

It belongs to the archaeal-type GTP cyclohydrolase family.

The catalysed reaction is GTP + 3 H2O = 2-amino-5-formylamino-6-(5-phospho-D-ribosylamino)pyrimidin-4(3H)-one + 2 phosphate + 2 H(+). In terms of biological role, catalyzes the formation of 2-amino-5-formylamino-6-ribofuranosylamino-4(3H)-pyrimidinone ribonucleotide monophosphate and inorganic phosphate from GTP. Also has an independent pyrophosphate phosphohydrolase activity. The polypeptide is GTP cyclohydrolase III (Methanococcus vannielii (strain ATCC 35089 / DSM 1224 / JCM 13029 / OCM 148 / SB)).